The chain runs to 189 residues: Threonylcarbamoyl-AMP synthase (189 aa).

The YrdC-like domain occupies 6-189; the sequence is TAIFTPIIDA…VLTGEQIRQG (184 aa).

It belongs to the SUA5 family. TsaC subfamily.

Its subcellular location is the cytoplasm. It catalyses the reaction L-threonine + hydrogencarbonate + ATP = L-threonylcarbamoyladenylate + diphosphate + H2O. Functionally, required for the formation of a threonylcarbamoyl group on adenosine at position 37 (t(6)A37) in tRNAs that read codons beginning with adenine. Catalyzes the conversion of L-threonine, HCO(3)(-)/CO(2) and ATP to give threonylcarbamoyl-AMP (TC-AMP) as the acyladenylate intermediate, with the release of diphosphate. The polypeptide is Threonylcarbamoyl-AMP synthase (Serratia proteamaculans (strain 568)).